The sequence spans 789 residues: Disintegrin and metalloproteinase domain-containing protein 7 (789 aa).

The signal sequence occupies residues 1-23; the sequence is MLTTGIFWMTVLISHIQERGIVG. The propeptide occupies 24–176; that stretch reads VEGQELVHPK…NHSCVGLNFT (153 aa). The Extracellular segment spans residues 24-667; sequence VEGQELVHPK…EWGEALNLTS (644 aa). N-linked (GlcNAc...) asparagine glycosylation is found at asparagine 84, asparagine 167, and asparagine 174. One can recognise a Peptidase M12B domain in the interval 199 to 393; sequence KFIELFVVAD…QKPACILNNP (195 aa). 4 cysteine pairs are disulfide-bonded: cysteine 310–cysteine 388, cysteine 350–cysteine 372, cysteine 352–cysteine 357, and cysteine 459–cysteine 479. Positions 401–487 constitute a Disintegrin domain; it reads YPFCGNKKVD…ECPKDEFQAN (87 aa). N-linked (GlcNAc...) asparagine glycosylation is found at asparagine 583, asparagine 628, and asparagine 664. The chain crosses the membrane as a helical span at residues 668 to 689; the sequence is VSIMVIVLVMVIIGVGLVILLI. The Cytoplasmic portion of the chain corresponds to 690 to 789; it reads RYQKCIKMKQ…DTQSGCERLG (100 aa). The segment at 764–789 is disordered; that stretch reads RGIADPKQTDNVNLNLDTQSGCERLG. Polar residues predominate over residues 772 to 789; it reads TDNVNLNLDTQSGCERLG.

Interacts with ITM2B in sperm; the interaction increases following capacitation. Interacts with HSPA5 and CANX. Expressed in both the head and tails of sperm (at protein level). Expressed in the epididymis (at protein level). Abundantly expressed in the apical region of the proximal caput epididymal epithelium, with decreasing expression in the mid and distal caput epididymal epithelium.

The protein localises to the membrane. Required for normal male fertility via maintenance of epithelial cell morphology in the caput epididymis and subsequently correct epididymis lumen structure required for sperm development. Plays a role in sperm motility, flagella morphology and tyrosine phosphorylation during sperm capacitance. Plays a role in normal expression levels of HSPA5, ITM2B and ADAM2 in sperm both prior to and post-capacitation. This is a non catalytic metalloprotease-like protein. This is Disintegrin and metalloproteinase domain-containing protein 7 from Mus musculus (Mouse).